The sequence spans 1080 residues: Ubiquitin carboxyl-terminal hydrolase 8 (1080 aa).

The MIT domain occupies 33 to 116 (TKNYIHSAQK…ESLKLRYEEA (84 aa)). Over residues 119–173 (RKQLEEKDRREEEQLQQQKRQEMGREDSGAAAKRSVENLLDSKTKTQRINGEKSE) the composition is skewed to basic and acidic residues. The tract at residues 119-176 (RKQLEEKDRREEEQLQQQKRQEMGREDSGAAAKRSVENLLDSKTKTQRINGEKSEGAA) is disordered. At Ser160 the chain carries Phosphoserine. In terms of domain architecture, Rhodanese spans 195-313 (KNTSLIIMDA…WLLCYPQFTT (119 aa)). Positions 379 to 393 (ALAGPGAAPRAEASP) are enriched in low complexity. Disordered regions lie at residues 379–455 (ALAG…TDEE), 468–605 (EKNK…RSEE), and 642–710 (PPEM…KPPC). Ser392 carries the phosphoserine modification. The short motif at 405-413 (PQVDRTKKP) is the SH3-binding element. Residues 417-427 (LPEDHRIKSEN) are compositionally biased toward basic and acidic residues. A Phosphoserine modification is found at Ser446. 3 stretches are compositionally biased toward basic and acidic residues: residues 468–535 (EKNK…RELS), 549–577 (SKSE…KRPA), and 593–605 (AQRE…RSEE). Residue Thr569 is modified to Phosphothreonine. Polar residues predominate over residues 678–688 (SYSSPDITQAL). Residues Ser680 and Ser681 each carry the phosphoserine modification. Residues 739–1071 (TGLRNLGNTC…AAYILFYTSL (333 aa)) enclose the USP domain. Cys748 serves as the catalytic Nucleophile. The residue at position 907 (Thr907) is a Phosphothreonine. The active-site Proton acceptor is the His1029.

The protein belongs to the peptidase C19 family. As to quaternary structure, forms a ternary complex with RNF128 and OTUB1. Interacts (via C-terminal UCH catalytic domain) with OTUB1 isoform 1. Interacts with STAM2 (via SH3 domain). Interacts with DNAJB3, EGFR, EPS15, RASGRF1, RNF41, YWHAE, YWHAG and YWHAZ. Interacts with NBR1, RASGRF1, RNF41 and IST1. Associates with the ESCRT-0 complex and with microtubules. Interacts with BIRC6/bruce and KIF23/MKLP1. Post-translationally, phosphorylation of Ser-680 is essential for interaction with YWHAE and for cytosol localization. Undergoes dephosphorylation at Ser-680 in the M phase. Tyrosine-phosphorylated in its N-terminal half in an EGFR-dependent manner. In terms of processing, ubiquitinated. Inactive form is mostly monoubiquitinated, but polyubiquitination happens too. Ubiquitination is increased in EGF-stimulated cells. Ubiquitination of active form is undetectable, suggesting a possibility that USP8 deubiquitinates itself, thereby regulating its own function. As to expression, highly expressed in testis. Expressed at intermediate level in brain.

The protein resides in the cytoplasm. It is found in the nucleus. It localises to the endosome membrane. The protein localises to the cell membrane. It carries out the reaction Thiol-dependent hydrolysis of ester, thioester, amide, peptide and isopeptide bonds formed by the C-terminal Gly of ubiquitin (a 76-residue protein attached to proteins as an intracellular targeting signal).. Hydrolase that can remove conjugated ubiquitin from proteins and therefore plays an important regulatory role at the level of protein turnover by preventing degradation. Converts both 'Lys-48' an 'Lys-63'-linked ubiquitin chains. Catalytic activity is enhanced in the M phase. Involved in cell proliferation. Required to enter into S phase in response to serum stimulation. May regulate T-cell anergy mediated by RNF128 via the formation of a complex containing RNF128 and OTUB1. Probably regulates the stability of STAM2 and RASGRF1. Regulates endosomal ubiquitin dynamics, cargo sorting, membrane traffic at early endosomes, and maintenance of ESCRT-0 stability. The level of protein ubiquitination on endosomes is essential for maintaining the morphology of the organelle. Deubiquitinates EPS15 and controls tyrosine kinase stability. Removes conjugated ubiquitin from EGFR thus regulating EGFR degradation and downstream MAPK signaling. Involved in acrosome biogenesis through interaction with the spermatid ESCRT-0 complex and microtubules. Deubiquitinates BIRC6/bruce and KIF23/MKLP1. Deubiquitinates BACE1 which inhibits BACE1 lysosomal degradation and modulates BACE-mediated APP cleavage and amyloid-beta formation. In Mus musculus (Mouse), this protein is Ubiquitin carboxyl-terminal hydrolase 8.